The chain runs to 266 residues: Putative zinc finger protein 034R (266 aa).

The disordered stretch occupies residues 84 to 176; sequence SPTKSVDKAA…GPKRDSTQQP (93 aa). Positions 88-100 are enriched in basic and acidic residues; that stretch reads SVDKAAQKEKKMP. 2 stretches are compositionally biased toward polar residues: residues 105–119 and 160–176; these read KPTTVTPTRNEQGIL and GVSQQQQGPKRDSTQQP. Residues 180–192 form a C3H1-type zinc finger; that stretch reads CKSVLKQAKCYFG.

It belongs to the IIV-6 077L family.

In Aedes vexans (Inland floodwater mosquito), this protein is Putative zinc finger protein 034R.